A 140-amino-acid polypeptide reads, in one-letter code: Large ribosomal subunit protein bL17 (140 aa).

The interval 121–140 is disordered; sequence AAKGLDSGPTAEANDDDSEE.

It belongs to the bacterial ribosomal protein bL17 family. As to quaternary structure, part of the 50S ribosomal subunit. Contacts protein L32.

This is Large ribosomal subunit protein bL17 from Rhodospirillum rubrum (strain ATCC 11170 / ATH 1.1.1 / DSM 467 / LMG 4362 / NCIMB 8255 / S1).